Reading from the N-terminus, the 538-residue chain is Bifunctional purine biosynthesis protein PurH (538 aa).

The 153-residue stretch at 6-158 folds into the MGS-like domain; that stretch reads KHIPAPDLHR…KNHAYVATVV (153 aa).

Belongs to the PurH family.

The enzyme catalyses (6R)-10-formyltetrahydrofolate + 5-amino-1-(5-phospho-beta-D-ribosyl)imidazole-4-carboxamide = 5-formamido-1-(5-phospho-D-ribosyl)imidazole-4-carboxamide + (6S)-5,6,7,8-tetrahydrofolate. It carries out the reaction IMP + H2O = 5-formamido-1-(5-phospho-D-ribosyl)imidazole-4-carboxamide. It participates in purine metabolism; IMP biosynthesis via de novo pathway; 5-formamido-1-(5-phospho-D-ribosyl)imidazole-4-carboxamide from 5-amino-1-(5-phospho-D-ribosyl)imidazole-4-carboxamide (10-formyl THF route): step 1/1. Its pathway is purine metabolism; IMP biosynthesis via de novo pathway; IMP from 5-formamido-1-(5-phospho-D-ribosyl)imidazole-4-carboxamide: step 1/1. The sequence is that of Bifunctional purine biosynthesis protein PurH from Brucella anthropi (strain ATCC 49188 / DSM 6882 / CCUG 24695 / JCM 21032 / LMG 3331 / NBRC 15819 / NCTC 12168 / Alc 37) (Ochrobactrum anthropi).